The sequence spans 194 residues: Imidazoleglycerol-phosphate dehydratase (194 aa).

The protein belongs to the imidazoleglycerol-phosphate dehydratase family.

It is found in the cytoplasm. It carries out the reaction D-erythro-1-(imidazol-4-yl)glycerol 3-phosphate = 3-(imidazol-4-yl)-2-oxopropyl phosphate + H2O. Its pathway is amino-acid biosynthesis; L-histidine biosynthesis; L-histidine from 5-phospho-alpha-D-ribose 1-diphosphate: step 6/9. This is Imidazoleglycerol-phosphate dehydratase from Bacillus velezensis (strain DSM 23117 / BGSC 10A6 / LMG 26770 / FZB42) (Bacillus amyloliquefaciens subsp. plantarum).